The chain runs to 1025 residues: Multidrug resistance protein MdtC (1025 aa).

12 helical membrane passes run 3–23 (FFALFIYRPVATILLSVAITL), 333–353 (EVEQTLIISVALVILVVFLFL), 360–380 (IIPAVAVPVSLIGTFAAMYLC), 387–407 (LSLMALTIATGFVVDDAIVVL), 431–451 (VGFTVLSMSLSLVAVFLPLLL), 463–483 (FAVTLSVAIGISLLVSLTLTP), 528–548 (LVGVVLLGTIALNIWLYISIP), 853–873 (VILIIAAIATVYIVLGILYES), 875–895 (VHPLTILSTLPSAGVGALLAL), 897–917 (LFNAPFSLIALIGIMLLIGIV), 953–973 (PIMMTTLAALFGALPLVLSGG), and 984–1004 (ITIVGGLVMSQLLTLYTTPVV).

It belongs to the resistance-nodulation-cell division (RND) (TC 2.A.6) family. MdtC subfamily. As to quaternary structure, part of a tripartite efflux system composed of MdtA, MdtB and MdtC. MdtC forms a heteromultimer with MdtB.

It localises to the cell inner membrane. Its function is as follows. The MdtABC tripartite complex confers resistance against novobiocin and deoxycholate. This is Multidrug resistance protein MdtC from Escherichia fergusonii (strain ATCC 35469 / DSM 13698 / CCUG 18766 / IAM 14443 / JCM 21226 / LMG 7866 / NBRC 102419 / NCTC 12128 / CDC 0568-73).